Consider the following 568-residue polypeptide: DNA ligase 2 (568 aa).

Position 254 (Glu-254) interacts with ATP. Lys-256 (N6-AMP-lysine intermediate) is an active-site residue. ATP is bound by residues Arg-261, Arg-276, Glu-306, Phe-346, Arg-425, and Lys-431.

The protein belongs to the ATP-dependent DNA ligase family. Mg(2+) is required as a cofactor.

It catalyses the reaction ATP + (deoxyribonucleotide)n-3'-hydroxyl + 5'-phospho-(deoxyribonucleotide)m = (deoxyribonucleotide)n+m + AMP + diphosphate.. In terms of biological role, DNA ligase that seals nicks in double-stranded DNA during DNA replication, DNA recombination and DNA repair. The sequence is that of DNA ligase 2 from Methanosarcina mazei (strain ATCC BAA-159 / DSM 3647 / Goe1 / Go1 / JCM 11833 / OCM 88) (Methanosarcina frisia).